The primary structure comprises 275 residues: 2-dehydro-3-deoxyphosphooctonate aldolase (275 aa).

It belongs to the KdsA family.

Its subcellular location is the cytoplasm. The catalysed reaction is D-arabinose 5-phosphate + phosphoenolpyruvate + H2O = 3-deoxy-alpha-D-manno-2-octulosonate-8-phosphate + phosphate. Its pathway is carbohydrate biosynthesis; 3-deoxy-D-manno-octulosonate biosynthesis; 3-deoxy-D-manno-octulosonate from D-ribulose 5-phosphate: step 2/3. It functions in the pathway bacterial outer membrane biogenesis; lipopolysaccharide biosynthesis. This is 2-dehydro-3-deoxyphosphooctonate aldolase from Francisella tularensis subsp. holarctica (strain LVS).